The sequence spans 466 residues: tRNA(Ile)-lysidine synthase (466 aa).

42-47 lines the ATP pocket; sequence SGGVDS.

Belongs to the tRNA(Ile)-lysidine synthase family.

The protein localises to the cytoplasm. The catalysed reaction is cytidine(34) in tRNA(Ile2) + L-lysine + ATP = lysidine(34) in tRNA(Ile2) + AMP + diphosphate + H(+). In terms of biological role, ligates lysine onto the cytidine present at position 34 of the AUA codon-specific tRNA(Ile) that contains the anticodon CAU, in an ATP-dependent manner. Cytidine is converted to lysidine, thus changing the amino acid specificity of the tRNA from methionine to isoleucine. The chain is tRNA(Ile)-lysidine synthase from Anaplasma marginale (strain St. Maries).